The sequence spans 291 residues: Transmembrane O-methyltransferase (291 aa).

A helical membrane pass occupies residues 31-51 (VGTMSPAIALAFLPLVVTLLV). Residues E137, 139–140 (GT), S145, E163, and S193 each bind S-adenosyl-L-methionine.

Belongs to the class I-like SAM-binding methyltransferase superfamily. Cation-dependent O-methyltransferase family. As to quaternary structure, interacts with LHFPL5, PCDH15, TMC1, TMC2 and TMIE. Interacts directly with TMC1. The interaction of TOMT with TMC1 and TMC2 is required for the transportation of TMC1/2 into the stereocilia of hair cells.

It localises to the membrane. It is found in the cytoplasm. Its subcellular location is the endoplasmic reticulum. It catalyses the reaction a catechol + S-adenosyl-L-methionine = a guaiacol + S-adenosyl-L-homocysteine + H(+). Functionally, catalyzes the O-methylation, and thereby the inactivation, of catecholamine neurotransmitters and catechol hormones. Required for auditory function. Component of the cochlear hair cell's mechanotransduction (MET) machinery. Involved in the assembly of the asymmetric tip-link MET complex. Required for transportation of TMC1 and TMC2 proteins into the mechanically sensitive stereocilia of the hair cells. The function in MET is independent of the enzymatic activity. The polypeptide is Transmembrane O-methyltransferase (Homo sapiens (Human)).